A 173-amino-acid polypeptide reads, in one-letter code: Crossover junction endodeoxyribonuclease RuvC (173 aa).

Residues aspartate 8, glutamate 67, and aspartate 139 contribute to the active site. Mg(2+) is bound by residues aspartate 8, glutamate 67, and aspartate 139.

Belongs to the RuvC family. In terms of assembly, homodimer which binds Holliday junction (HJ) DNA. The HJ becomes 2-fold symmetrical on binding to RuvC with unstacked arms; it has a different conformation from HJ DNA in complex with RuvA. In the full resolvosome a probable DNA-RuvA(4)-RuvB(12)-RuvC(2) complex forms which resolves the HJ. Requires Mg(2+) as cofactor.

The protein localises to the cytoplasm. It catalyses the reaction Endonucleolytic cleavage at a junction such as a reciprocal single-stranded crossover between two homologous DNA duplexes (Holliday junction).. Functionally, the RuvA-RuvB-RuvC complex processes Holliday junction (HJ) DNA during genetic recombination and DNA repair. Endonuclease that resolves HJ intermediates. Cleaves cruciform DNA by making single-stranded nicks across the HJ at symmetrical positions within the homologous arms, yielding a 5'-phosphate and a 3'-hydroxyl group; requires a central core of homology in the junction. The consensus cleavage sequence is 5'-(A/T)TT(C/G)-3'. Cleavage occurs on the 3'-side of the TT dinucleotide at the point of strand exchange. HJ branch migration catalyzed by RuvA-RuvB allows RuvC to scan DNA until it finds its consensus sequence, where it cleaves and resolves the cruciform DNA. The chain is Crossover junction endodeoxyribonuclease RuvC from Shewanella oneidensis (strain ATCC 700550 / JCM 31522 / CIP 106686 / LMG 19005 / NCIMB 14063 / MR-1).